Reading from the N-terminus, the 1942-residue chain is MEDRRAEKSCEQACESLKRQDYEMALKHCTEALLSLGQYSMADFTGPCPLEIERIKIESLLYRIASFLQLKNYVQADEDCRHVLGEGLAKGEDAFRAVLCCMQLKGKLQPVSTILAKSLTGESLNGMVTKDLTRLKTLLSETETATSNALSGYHVEDLDEGSCNGWHFRPPPRGITSSEEYTLCKRFLEQGICRYGAQCTSAHSQEELAEWQKRYASRLIKLKQQNENKQLSGSYMETLIEKWMNSLSPEKVLSECIEGVKVEHNPDLSVTVSTKKSHQTWTFALTCKPARMLYRVALLYDAHRPHFSIIAISAGDSTTQVSQEVPENCQEWIGGKMAQNGLDHYVYKVGIAFNTEIFGTFRQTIVFDFGLEPVLMQRVMIDAASTEDLEYLMHAKQQLVTTAKRWDSSSKTIIDFEPNETTDLEKSLLIRYQIPLSADQLFTQSVLDKSLTKSNYQSRLHDLLYIEEIAQYKEISKFNLKVQLQILASFMLTGVSGGAKYAQNGQLFGRFKLTETLSEDTLAGRLVMTKVNAVYLLPVPKQKLVQTQGTKEKVYEATIEEKTKEYIFLRLSRECCEELNLRPDCDTQVELQFQLNRLPLCEMHYALDRIKDNGVLFPDISMTPTIPWSPNRQWDEQLDPRLNAKQKEAVLAITTPLAIQLPPVLIIGPYGTGKTFTLAQAVKHILQQQETRILICTHSNSAADLYIKDYLHPYVEAGNPQARPLRVYFRNRWVKTVHPVVHQYCLISSAHSTFQMPQKEDILKHRVVVVTLNTSQYLCQLDLEPGFFTHILLDEAAQAMECETIMPLALATQNTRIVLAGDHMQLSPFVYSEFARERNLHVSLLDRLYEHYPAEFPCRILLCENYRSHEAIINYTSELFYEGKLMASGKQPAHKDFYPLTFFTARGEDVQEKNSTAFYNNAEVFEVVERVEELRRKWPVAWGKLDDGSIGVVTPYADQVFRIRAELRKKRLSDVNVERVLNVQGKQFRVLFLSTVRTRHTCKHKQTPIKKKEQLLEDSTEDLDYGFLSNYKLLNTAITRAQSLVAVVGDPIALCSIGRCRKFWERFIALCHENSSLHGITFEQIKAQLEALELKKTYVLNPLAPEFIPRALRLQHSGSTNKQQQSPPKGKSLHHTQNDHFQNDGIVQPNPSVLIGNPIRAYTPPPPLGPHPNLGKSPSPVQRIDPHTGTSILYVPAVYGGNVVMSVPLPVPWTGYQGRFAVDPRIITHQAAMAYNMNLLQTHGRGSPIPYGLGHHPPVTIGQPQNQHQEKDQHEQNRNGKSDTNNSGPEINKIRTPEKKPTEPKQVDLESNPQNRSPESRPSVVYPSTKFPRKDNLNPRHINLPLPAPHAQYAIPNRHFHPLPQLPRPPFPIPQQHTLLNQQQNNLPEQPNQIPPQPNQVVQQQSQLNQQPQQPPPQLSPAYQAGPNNAFFNSAVAHRPQSPPAEAVIPEQQPPPMLQEGHSPLRAIAQPGPILPSHLNSFIDENPSGLPIGEALDRIHGSVALETLRQQQARFQQWSEHHAFLSQGSAPYPHHHHPHLQHLPQPPLGLHQPPVRADWKLTSSAEDEVETTYSRFQDLIRELSHRDQSETRELAEMPPPQSRLLQYRQVQSRSPPAVPSPPSSTDHSSHFSNFNDNSRDIEVASNPAFPQRLPPQIFNSPFSLPSEHLAPPPLKYLAPDGAWTFANLQQNHLMGPGFPYGLPPLPHRPPQNPFVQIQNHQHAIGQEPFHPLSSRTVSSSSLPSLEEYEPRGPGRPLYQRRISSSSVQPCSEEVSTPQDSLAQCKELQDHSNQSSFNFSSPESWVNTTSSTPYQNIPCNGSSRTAQPRELIAPPKTVKPPEDQLKSENLEVSSSFNYSVLQHLGQFPPLMPNKQIAESANSSSPQSSAGGKPAMSYASALRAPPKPRPPPEQAKKSSDPLSLFQELSLGSSSGSNGFYSYFK.

The C3H1-type zinc finger occupies 178–206 (SEEYTLCKRFLEQGICRYGAQCTSAHSQE). Position 248 is a phosphoserine (Ser-248). 668 to 675 (GPYGTGKT) provides a ligand contact to ATP. The short motif at 794–797 (DEAA) is the DEAA box element. The segment covering 1117 to 1127 (SGSTNKQQQSP) has biased composition (polar residues). The disordered stretch occupies residues 1117-1141 (SGSTNKQQQSPPKGKSLHHTQNDHF). Residue Thr-1163 is modified to Phosphothreonine. Arg-1245 is modified (omega-N-methylarginine). Disordered stretches follow at residues 1246–1345 (GSPI…INLP), 1386–1429 (NLPE…GPNN), 1527–1552 (QGSA…GLHQ), and 1608–1637 (RQVQ…FNDN). 2 stretches are compositionally biased toward basic and acidic residues: residues 1268–1281 (HQEK…RNGK) and 1292–1308 (NKIR…KQVD). Positions 1399 to 1412 (NQVVQQQSQLNQQP) are enriched in low complexity. Residue Ser-1614 is modified to Phosphoserine. The span at 1623–1636 (SSTDHSSHFSNFND) shows a compositional bias: low complexity. Residues Ser-1645, Ser-1738, Ser-1741, and Ser-1766 each carry the phosphoserine modification. Disordered stretches follow at residues 1729-1779 (FHPL…TPQD), 1792-1843 (NQSS…PEDQ), and 1870-1942 (MPNK…SYFK). The span at 1731–1745 (PLSSRTVSSSSLPSL) shows a compositional bias: low complexity. 2 stretches are compositionally biased toward polar residues: residues 1761-1779 (RISS…TPQD) and 1792-1825 (NQSS…SRTA). Low complexity-rich tracts occupy residues 1876 to 1888 (AESA…QSSA) and 1920 to 1942 (LSLF…SYFK).

It belongs to the DNA2/NAM7 helicase family. In terms of assembly, interacts with SMYD2. Interacts with POLR2A. Interacts with SMYD3; the interaction may bridge SMYD3 and RNA polymerase II. In terms of tissue distribution, expressed predominantly in thymus and brain. Expression is down-regulated in 28 of 95 tested cancer cell lines.

It localises to the nucleus. In terms of biological role, may act as a helicase that plays a role in RNA metabolism in multiple tissues and organs within the developing embryo. The polypeptide is Probable helicase with zinc finger domain (HELZ) (Homo sapiens (Human)).